The sequence spans 1035 residues: NHS-like protein 3 (1035 aa).

Val2 is lipidated: N-myristoyl glycine. Disordered regions lie at residues 23–44 (KAENDKHLSVGPGQGPGSAVDE), 76–105 (QEKQKLNKGGWDHGDTQSIQSSRTGPDEDN), and 133–162 (IQRKGSTFRPHDSFPKSGKSGRRRRERRST). Positions 76–90 (QEKQKLNKGGWDHGD) are enriched in basic and acidic residues. Phosphoserine occurs at positions 93, 138, 145, and 161. Residue Thr162 is modified to Phosphothreonine. Phosphoserine is present on Ser215. The residue at position 320 (Arg320) is an Asymmetric dimethylarginine. Residues Ser322, Ser327, Ser330, Ser338, Ser339, Ser341, and Ser342 each carry the phosphoserine modification. Disordered stretches follow at residues 332–869 (RSLG…APSS) and 885–1035 (SEGL…KELA). The segment covering 338–365 (SSVSSPQPRSRHPSSSSDTWSHSQSSDT) has biased composition (low complexity). The span at 366-388 (IVSDGSTLSSKGGSEGQPESSTA) shows a compositional bias: polar residues. Phosphoserine occurs at positions 400, 404, and 409. Residues 411–429 (AEASDTLSIRSSGQLSGRS) show a composition bias toward polar residues. Basic residues predominate over residues 431–449 (SLRKLKRPPPPPRRTHSLH). Over residues 517 to 532 (RTLSPSSGYSSQSGTP) the composition is skewed to low complexity. Position 531 is a phosphothreonine (Thr531). Residues 543-552 (PASPGKAQPP) are compositionally biased toward pro residues. Phosphoserine is present on Ser545. The segment covering 562-589 (SPGASVSSSLTSLCSSSSDPAPSDRSGP) has biased composition (low complexity). Phosphothreonine is present on Thr593. A compositionally biased stretch (pro residues) spans 602–624 (PPHPKVPAPFSPPPSKPRSPNPA). Ser612 is modified (phosphoserine). Low complexity-rich tracts occupy residues 625 to 645 (APALAAPAVVPGPVSTTDASP) and 652 to 662 (QTTLTPLQESP). A phosphoserine mark is found at Ser669 and Ser673. 2 stretches are compositionally biased toward pro residues: residues 669–685 (SPPPSPPPSYHPPPPPT) and 709–718 (NWPPPPPPAP). Residues 737-765 (SVASPEPAGPSGSPELVSSPAASSSSATA) are compositionally biased toward low complexity. The segment covering 771–784 (PGSPDPPPAPPAPA) has biased composition (pro residues). Residues 838–848 (GAPTPALGPSA) are compositionally biased toward low complexity. A phosphoserine mark is found at Ser858, Ser862, and Ser868. Residues 894 to 906 (NGPPEAEPRPPQS) are compositionally biased toward pro residues. Residues Ser929, Ser959, Ser971, and Ser979 each carry the phosphoserine modification. The span at 961–980 (KAPPPVARKPSVGVPPPASP) shows a compositional bias: pro residues. Positions 999–1008 (TQDRTKRELA) are enriched in basic and acidic residues.

In terms of tissue distribution, expressed in lung.

Functionally, able to directly activate the TNF-NFkappaB signaling pathway. This Homo sapiens (Human) protein is NHS-like protein 3.